A 737-amino-acid chain; its full sequence is Aryl hydrocarbon receptor nuclear translocator 2 (737 aa).

The disordered stretch occupies residues Met1–Gly73. The span at Ser64 to Gly73 shows a compositional bias: basic and acidic residues. Residues Tyr78–Met131 form the bHLH domain. 2 PAS domains span residues Thr149 to Met221 and Ser340 to Lys406. Residues Ser413–Leu456 form the PAC domain. 2 disordered regions span residues Met525–Ser556 and Gln588–Tyr721. Polar residues-rich tracts occupy residues Pro528 to Pro543 and Gln588 to Asp626. Residues Pro627–Ser642 show a composition bias toward low complexity. The span at Gly643–Phe656 shows a compositional bias: polar residues. The segment covering Ser659–Gln688 has biased composition (low complexity).

As to quaternary structure, efficient DNA binding requires dimerization with another bHLH protein. Heterodimer with the aryl hydrocarbon receptor (AHR), SIM1 or HIF2A/EPAS-1. Isoform 1 and isoform 2 are most highly expressed in the brain, eye and skeletal muscle and to a lower degree in liver, heart, kidney and swim bladder. Isoform 3 is most highly expressed in the eye, forebrain, midbrain, hindbrain, skeletal muscle, gills and brain but is barely detectable in liver, heart, kidney and swim bladder. Before the pharyngula period isoform 3 is expressed throughout the entire embryo and during this period extensively in the brain and eye.

The protein localises to the nucleus. In terms of biological role, transcription factor that plays a role in the development of the hypothalamo-pituitary axis. Specifically recognizes the xenobiotic response element (XRE). Isoform 1 acts as a transcriptional activator. Isoform 3 acts as a transcriptional repressor. This Danio rerio (Zebrafish) protein is Aryl hydrocarbon receptor nuclear translocator 2.